The chain runs to 109 residues: Protein reprimo (109 aa).

Residues N7 and N18 are each glycosylated (N-linked (GlcNAc...) asparagine). The chain crosses the membrane as a helical span at residues 56–76 (VVQIAVMCVLSLTVVFGIFFL). A Phosphoserine modification is found at S98.

Belongs to the reprimo family.

It is found in the cytoplasm. Its subcellular location is the membrane. Its function is as follows. May be involved in the regulation of p53-dependent G2 arrest of the cell cycle. Seems to induce cell cycle arrest by inhibiting CDK1 activity and nuclear translocation of the CDC2 cyclin B1 complex. This is Protein reprimo (RPRM) from Homo sapiens (Human).